Reading from the N-terminus, the 375-residue chain is Sperm microtubule associated protein 2 (375 aa).

The interval 1-78 is disordered; the sequence is MGELGEHRAS…MAGEELPETS (78 aa). Acidic residues predominate over residues 59-75; the sequence is EPEEEIPPEEMAGEELP. THEG repeat units follow at residues 110-129, 176-195, 214-233, 250-269, 282-301, 318-337, and 352-371; these read AKGR…PKTN, TITV…PKRF, STLE…PKVR, AAQM…PRPP, PKPY…PKAL, VTKN…PKIR, and ASLV…PKYI. Ser287 is modified (phosphoserine).

As to quaternary structure, interacts with CCT5. Testis specific (at protein level). Specifically expressed in spermatids; Sertoli cells maintain the level of expression in spermatids. If isolated spermatids are cultivated for 16 hours alone, the expression of THEG is down-regulated. May require signals from Sertoli cells to initiate changes in its gene expression through spermatogenesis.

The protein localises to the nucleus. Its function is as follows. May be involved (but not essential) in spermatogenesis. This Mus musculus (Mouse) protein is Sperm microtubule associated protein 2.